The chain runs to 325 residues: Tartrate-resistant acid phosphatase type 5 (325 aa).

The first 21 residues, 1 to 21 (MDTWTLLLVLHTSLLLPWAEG), serve as a signal peptide directing secretion. 2 N-linked (GlcNAc...) asparagine glycosylation sites follow: Asn-116 and Asn-147.

As to quaternary structure, exists either as monomer or, after proteolytic processing, as a dimer of two chains linked by disulfide bond(s). It depends on Fe cation as a cofactor.

It localises to the lysosome. It catalyses the reaction a phosphate monoester + H2O = an alcohol + phosphate. The polypeptide is Tartrate-resistant acid phosphatase type 5 (ACP5) (Oryctolagus cuniculus (Rabbit)).